The chain runs to 195 residues: Pyridoxal 5'-phosphate synthase subunit PdxT (195 aa).

46–48 (GES) is an L-glutamine binding site. C78 acts as the Nucleophile in catalysis. Residues R107 and 136-137 (IR) each bind L-glutamine. Catalysis depends on charge relay system residues H173 and E175.

The protein belongs to the glutaminase PdxT/SNO family. In the presence of PdxS, forms a dodecamer of heterodimers. Only shows activity in the heterodimer.

It carries out the reaction aldehydo-D-ribose 5-phosphate + D-glyceraldehyde 3-phosphate + L-glutamine = pyridoxal 5'-phosphate + L-glutamate + phosphate + 3 H2O + H(+). The catalysed reaction is L-glutamine + H2O = L-glutamate + NH4(+). It participates in cofactor biosynthesis; pyridoxal 5'-phosphate biosynthesis. Functionally, catalyzes the hydrolysis of glutamine to glutamate and ammonia as part of the biosynthesis of pyridoxal 5'-phosphate. The resulting ammonia molecule is channeled to the active site of PdxS. This chain is Pyridoxal 5'-phosphate synthase subunit PdxT, found in Dehalococcoides mccartyi (strain CBDB1).